We begin with the raw amino-acid sequence, 456 residues long: tRNA modification GTPase MnmE (456 aa).

(6S)-5-formyl-5,6,7,8-tetrahydrofolate is bound by residues R25, E82, and K121. The TrmE-type G domain maps to 217–379; the sequence is GIKVVIIGKP…LLDEIVKIAG (163 aa). Residue N227 participates in K(+) binding. Residues 227–232, 246–252, and 271–274 contribute to the GTP site; these read NAGKSS, TDIAGTT, and DTAG. S231 lines the Mg(2+) pocket. K(+) contacts are provided by T246, I248, and T251. T252 contacts Mg(2+). K456 contacts (6S)-5-formyl-5,6,7,8-tetrahydrofolate.

Belongs to the TRAFAC class TrmE-Era-EngA-EngB-Septin-like GTPase superfamily. TrmE GTPase family. As to quaternary structure, homodimer. Heterotetramer of two MnmE and two MnmG subunits. The cofactor is K(+).

The protein localises to the cytoplasm. Its function is as follows. Exhibits a very high intrinsic GTPase hydrolysis rate. Involved in the addition of a carboxymethylaminomethyl (cmnm) group at the wobble position (U34) of certain tRNAs, forming tRNA-cmnm(5)s(2)U34. In Endomicrobium trichonymphae, this protein is tRNA modification GTPase MnmE.